A 510-amino-acid chain; its full sequence is Cobyric acid synthase (510 aa).

The GATase cobBQ-type domain maps to cysteine 249–alanine 458. Cysteine 336 serves as the catalytic Nucleophile. Histidine 450 is a catalytic residue.

The protein belongs to the CobB/CobQ family. CobQ subfamily.

The protein operates within cofactor biosynthesis; adenosylcobalamin biosynthesis. Functionally, catalyzes amidations at positions B, D, E, and G on adenosylcobyrinic A,C-diamide. NH(2) groups are provided by glutamine, and one molecule of ATP is hydrogenolyzed for each amidation. In Shewanella oneidensis (strain ATCC 700550 / JCM 31522 / CIP 106686 / LMG 19005 / NCIMB 14063 / MR-1), this protein is Cobyric acid synthase.